The following is a 66-amino-acid chain: MAKGKDVRIRVILECNSCVRNDLNKESPGISRYITQKNRHNTPSRLELRKFCPYCYKHTIHGEIKK.

It belongs to the bacterial ribosomal protein bL33 family.

It localises to the plastid. The protein resides in the chloroplast. The sequence is that of Large ribosomal subunit protein bL33c from Nandina domestica (Heavenly bamboo).